A 375-amino-acid chain; its full sequence is 23S rRNA (uracil(747)-C(5))-methyltransferase RlmC (375 aa).

Positions 3, 11, 14, and 87 each coordinate [4Fe-4S] cluster. Residues glutamine 212, phenylalanine 241, glutamate 262, and asparagine 307 each coordinate S-adenosyl-L-methionine. Cysteine 334 (nucleophile) is an active-site residue.

This sequence belongs to the class I-like SAM-binding methyltransferase superfamily. RNA M5U methyltransferase family. RlmC subfamily.

It carries out the reaction uridine(747) in 23S rRNA + S-adenosyl-L-methionine = 5-methyluridine(747) in 23S rRNA + S-adenosyl-L-homocysteine + H(+). Its function is as follows. Catalyzes the formation of 5-methyl-uridine at position 747 (m5U747) in 23S rRNA. The protein is 23S rRNA (uracil(747)-C(5))-methyltransferase RlmC of Escherichia coli O45:K1 (strain S88 / ExPEC).